We begin with the raw amino-acid sequence, 950 residues long: Protein lin-54 homolog (950 aa).

Disordered stretches follow at residues 1–63 (MDTS…DSLN), 366–387 (NASATSSTTHTTGGQTPSTSSG), 500–523 (ASKPASAASSSATPSASQELPRKH), 533–552 (KQSASVSSEASDSSDAGPEA), and 638–702 (VENK…LPPG). Residues 10–26 (SLDDTEPLPELSFEDFL) show a composition bias toward acidic residues. Positions 29–39 (TSEKSSQHMEI) are enriched in basic and acidic residues. Acidic residues predominate over residues 40–55 (EALDSEEDNIGGEDLA). Composition is skewed to low complexity over residues 366–386 (NASATSSTTHTTGGQTPSTSS), 500–516 (ASKPASAASSSATPSAS), 535–548 (SASVSSEASDSSDA), and 661–682 (QQQSKHQQLQAQAKQRIRQQQL). Residues 737 to 849 (RRKHCNCSKS…KCVGCRNMED (113 aa)) form the CRC domain.

It belongs to the lin-54 family. As to quaternary structure, component of the DREAM complex at least composed of Myb, Caf1-55, mip40, mip120, mip130, E2f2, Dp, Rbf, Rbf2, lin-52, HDAC1/Rpd3 and l(3)mbt.

It localises to the nucleus. In terms of biological role, component of the DREAM complex, a multiprotein complex that can both act as a transcription activator or repressor depending on the context. In follicle cells, the complex plays a central role in the site-specific DNA replication at the chorion loci. During development, the complex represses transcription of developmentally controlled E2F target genes. The polypeptide is Protein lin-54 homolog (mip120) (Drosophila melanogaster (Fruit fly)).